Here is a 220-residue protein sequence, read N- to C-terminus: 7-carboxy-7-deazaguanine synthase (220 aa).

Substrate-binding positions include 16 to 18 (IQG) and arginine 31. In terms of domain architecture, Radical SAM core spans 22–215 (FAGWPCAFVR…LQLHKYIWNP (194 aa)). 3 residues coordinate [4Fe-4S] cluster: cysteine 35, cysteine 39, and cysteine 42. Position 44 (threonine 44) interacts with Mg(2+). Threonine 74 contributes to the substrate binding site. Glycine 76 serves as a coordination point for S-adenosyl-L-methionine.

Belongs to the radical SAM superfamily. 7-carboxy-7-deazaguanine synthase family. In terms of assembly, homodimer. The cofactor is [4Fe-4S] cluster. It depends on S-adenosyl-L-methionine as a cofactor. Mg(2+) is required as a cofactor.

The enzyme catalyses 6-carboxy-5,6,7,8-tetrahydropterin + H(+) = 7-carboxy-7-deazaguanine + NH4(+). The protein operates within purine metabolism; 7-cyano-7-deazaguanine biosynthesis. In terms of biological role, catalyzes the complex heterocyclic radical-mediated conversion of 6-carboxy-5,6,7,8-tetrahydropterin (CPH4) to 7-carboxy-7-deazaguanine (CDG), a step common to the biosynthetic pathways of all 7-deazapurine-containing compounds. The protein is 7-carboxy-7-deazaguanine synthase of Chlorobaculum tepidum (strain ATCC 49652 / DSM 12025 / NBRC 103806 / TLS) (Chlorobium tepidum).